A 284-amino-acid polypeptide reads, in one-letter code: Bifunctional protein FolD (284 aa).

Residues 166-168 (GAS), Ser-191, and Ile-232 each bind NADP(+).

This sequence belongs to the tetrahydrofolate dehydrogenase/cyclohydrolase family. In terms of assembly, homodimer.

It catalyses the reaction (6R)-5,10-methylene-5,6,7,8-tetrahydrofolate + NADP(+) = (6R)-5,10-methenyltetrahydrofolate + NADPH. The catalysed reaction is (6R)-5,10-methenyltetrahydrofolate + H2O = (6R)-10-formyltetrahydrofolate + H(+). It functions in the pathway one-carbon metabolism; tetrahydrofolate interconversion. Catalyzes the oxidation of 5,10-methylenetetrahydrofolate to 5,10-methenyltetrahydrofolate and then the hydrolysis of 5,10-methenyltetrahydrofolate to 10-formyltetrahydrofolate. The polypeptide is Bifunctional protein FolD (Neisseria gonorrhoeae (strain ATCC 700825 / FA 1090)).